Reading from the N-terminus, the 453-residue chain is O-methyltransferase bik3 (453 aa).

The disordered stretch occupies residues 1-25 (MVSNGISNGTNGTNGTTTNGTNGVN). A compositionally biased stretch (low complexity) spans 8–25 (NGTNGTNGTTTNGTNGVN). Asp-305 provides a ligand contact to S-adenosyl-L-methionine. Catalysis depends on His-355, which acts as the Proton acceptor.

It belongs to the class I-like SAM-binding methyltransferase superfamily. Cation-independent O-methyltransferase family. COMT subfamily.

The protein operates within secondary metabolite biosynthesis. In terms of biological role, O-methyltransferase; part of the gene cluster that mediates the biosynthesis of bikaverin, a red pigment also considered as a mycotoxin. The first stage is catalyzed by the polyketide synthase bik1, which catalyzes the formation of the intermediate SMA76a also knowm as pre-bikaverin. FAD-dependent monooxygenase bik2 might then be responsible for the oxidation of pre-bikaverin to oxo-pre-bikaverin which is in turn methylated by the O-methyltransferase bik3 to me-oxo-pre-bikaverin. A further cycle of oxydation and methylation by bik2 and bik3 leads to the final product of bikaverin, via a nor-bikaverin intermediate. The polypeptide is O-methyltransferase bik3 (Gibberella fujikuroi (strain CBS 195.34 / IMI 58289 / NRRL A-6831) (Bakanae and foot rot disease fungus)).